Here is a 303-residue protein sequence, read N- to C-terminus: N-acetyl-D-glucosamine kinase (303 aa).

ATP-binding positions include 4–11 (GFDVGGTK) and 133–140 (GFGGGLVF). Residues His157, Cys177, Cys179, and Cys184 each coordinate Zn(2+).

The protein belongs to the ROK (NagC/XylR) family. NagK subfamily.

It catalyses the reaction N-acetyl-D-glucosamine + ATP = N-acetyl-D-glucosamine 6-phosphate + ADP + H(+). Its pathway is cell wall biogenesis; peptidoglycan recycling. In terms of biological role, catalyzes the phosphorylation of N-acetyl-D-glucosamine (GlcNAc) derived from cell-wall degradation, yielding GlcNAc-6-P. The polypeptide is N-acetyl-D-glucosamine kinase (Photobacterium profundum (strain SS9)).